Consider the following 138-residue polypeptide: ATP synthase epsilon chain (138 aa).

The protein belongs to the ATPase epsilon chain family. F-type ATPases have 2 components, CF(1) - the catalytic core - and CF(0) - the membrane proton channel. CF(1) has five subunits: alpha(3), beta(3), gamma(1), delta(1), epsilon(1). CF(0) has three main subunits: a, b and c.

It localises to the cell inner membrane. Its function is as follows. Produces ATP from ADP in the presence of a proton gradient across the membrane. The protein is ATP synthase epsilon chain of Methylibium petroleiphilum (strain ATCC BAA-1232 / LMG 22953 / PM1).